The sequence spans 157 residues: Serine-protein kinase RsbW (157 aa).

Belongs to the anti-sigma-factor family.

The enzyme catalyses L-seryl-[protein] + ATP = O-phospho-L-seryl-[protein] + ADP + H(+). It carries out the reaction L-threonyl-[protein] + ATP = O-phospho-L-threonyl-[protein] + ADP + H(+). Its function is as follows. Negative regulator of sigma-B activity. Phosphorylates and inactivates its specific antagonist protein, RsbV. Upon phosphorylation of RsbV, RsbW is released and binds to sigma-B, thereby blocking its ability to form an RNA polymerase holoenzyme (E-sigma-B). This chain is Serine-protein kinase RsbW, found in Listeria innocua serovar 6a (strain ATCC BAA-680 / CLIP 11262).